Reading from the N-terminus, the 732-residue chain is Protein kinase YpkA (732 aa).

A Protein kinase domain is found at 136 to 408 (VAETDKFAEG…SNEARLHEFL (273 aa)). ATP-binding positions include 142–150 (FAEGESHIS) and Lys163. Asp270 acts as the Proton acceptor in catalysis.

This sequence belongs to the protein kinase superfamily. Ser/Thr protein kinase family.

The protein resides in the secreted. It catalyses the reaction L-seryl-[protein] + ATP = O-phospho-L-seryl-[protein] + ADP + H(+). It carries out the reaction L-threonyl-[protein] + ATP = O-phospho-L-threonyl-[protein] + ADP + H(+). In terms of biological role, acts as a virulence determinant. The polypeptide is Protein kinase YpkA (ypkA) (Yersinia pseudotuberculosis serotype I (strain IP32953)).